Consider the following 299-residue polypeptide: 4-hydroxy-tetrahydrodipicolinate synthase (299 aa).

T45 provides a ligand contact to pyruvate. Y133 serves as the catalytic Proton donor/acceptor. Residue K161 is the Schiff-base intermediate with substrate of the active site. I203 lines the pyruvate pocket.

This sequence belongs to the DapA family. As to quaternary structure, homotetramer; dimer of dimers.

It is found in the cytoplasm. The enzyme catalyses L-aspartate 4-semialdehyde + pyruvate = (2S,4S)-4-hydroxy-2,3,4,5-tetrahydrodipicolinate + H2O + H(+). It participates in amino-acid biosynthesis; L-lysine biosynthesis via DAP pathway; (S)-tetrahydrodipicolinate from L-aspartate: step 3/4. Functionally, catalyzes the condensation of (S)-aspartate-beta-semialdehyde [(S)-ASA] and pyruvate to 4-hydroxy-tetrahydrodipicolinate (HTPA). This chain is 4-hydroxy-tetrahydrodipicolinate synthase, found in Blochmanniella pennsylvanica (strain BPEN).